A 143-amino-acid chain; its full sequence is Peptide methionine sulfoxide reductase MsrB (143 aa).

The MsrB domain occupies 16–139 (DAELRRRLTP…NSAALNFESR (124 aa)). C55, C58, C104, and C107 together coordinate Zn(2+). The Nucleophile role is filled by C128.

Belongs to the MsrB Met sulfoxide reductase family. The cofactor is Zn(2+).

It catalyses the reaction L-methionyl-[protein] + [thioredoxin]-disulfide + H2O = L-methionyl-(R)-S-oxide-[protein] + [thioredoxin]-dithiol. This is Peptide methionine sulfoxide reductase MsrB from Burkholderia ambifaria (strain ATCC BAA-244 / DSM 16087 / CCUG 44356 / LMG 19182 / AMMD) (Burkholderia cepacia (strain AMMD)).